Here is a 142-residue protein sequence, read N- to C-terminus: Hemoglobin subunit beta (142 aa).

The Globin domain maps to 3–142 (KLSEDQEHYI…VAEALSSNYH (140 aa)). 2 residues coordinate heme b: His60 and His89.

This sequence belongs to the globin family. Heterotetramer of two alpha chains and two beta chains. As to expression, red blood cells.

Involved in oxygen transport from gills to the various peripheral tissues. The chain is Hemoglobin subunit beta (HBB) from Hemitrygon akajei (Red stingray).